A 536-amino-acid chain; its full sequence is Lysosomal acid glucosylceramidase (536 aa).

An N-terminal signal peptide occupies residues 1-39 (MEFSSPSREECPKPSGRVSIMAGSLTGLLLLQAVSWASG). Intrachain disulfides connect Cys-43–Cys-55 and Cys-57–Cys-62. Residues Asn-58, Asn-98, and Asn-185 are each glycosylated (N-linked (GlcNAc...) asparagine). Residue Glu-274 is the Proton donor of the active site. The N-linked (GlcNAc...) asparagine glycan is linked to Asn-309. Glu-379 serves as the catalytic Nucleophile. Asn-501 carries an N-linked (GlcNAc...) asparagine glycan.

Belongs to the glycosyl hydrolase 30 family. In terms of assembly, interacts with saposin-C. Interacts with SCARB2. Interacts with TCP1. Interacts with GRN; this interaction prevents aggregation of GBA1-SCARB2 complex via interaction with HSPA1A upon stress.

The protein localises to the lysosome membrane. The catalysed reaction is a beta-D-glucosyl-(1&lt;-&gt;1')-N-acylsphing-4-enine + H2O = an N-acylsphing-4-enine + D-glucose. It carries out the reaction a beta-D-galactosyl-(1&lt;-&gt;1')-N-acylsphing-4-enine + H2O = an N-acylsphing-4-enine + D-galactose. The enzyme catalyses cholesteryl 3-beta-D-glucoside + H2O = cholesterol + D-glucose. It catalyses the reaction a beta-D-glucosyl-(1&lt;-&gt;1')-N-acylsphing-4-enine + cholesterol = cholesteryl 3-beta-D-glucoside + an N-acylsphing-4-enine. The catalysed reaction is beta-D-glucosyl-N-(9Z-octadecenoyl)-sphing-4E-enine + cholesterol = N-(9Z-octadecenoyl)-sphing-4-enine + cholesteryl 3-beta-D-glucoside. It carries out the reaction beta-D-glucosyl-N-octanoylsphing-4E-enine + cholesterol = N-octanoylsphing-4-enine + cholesteryl 3-beta-D-glucoside. The enzyme catalyses beta-D-glucosyl-N-dodecanoylsphing-4-enine + cholesterol = N-dodecanoylsphing-4-enine + cholesteryl 3-beta-D-glucoside. It catalyses the reaction beta-D-glucosyl-(1&lt;-&gt;1)-N-octadecanoylsphing-4-enine + cholesterol = N-octadecanoylsphing-4-enine + cholesteryl 3-beta-D-glucoside. The catalysed reaction is beta-D-glucosyl-(1&lt;-&gt;1')-N-(15Z-tetracosenoyl)-sphing-4-enine + cholesterol = N-(15Z-tetracosenoyl)-sphing-4-enine + cholesteryl 3-beta-D-glucoside. It carries out the reaction a beta-D-galactosyl-(1&lt;-&gt;1')-N-acylsphing-4-enine + cholesterol = cholesteryl 3-beta-D-galactoside + an N-acylsphing-4-enine. The enzyme catalyses 1-(beta-D-galactosyl)-N-dodecanoylsphing-4-enine + cholesterol = cholesteryl 3-beta-D-galactoside + N-dodecanoylsphing-4-enine. It catalyses the reaction a beta-D-xylosyl-(1&lt;-&gt;1')-N-acylsphing-4-enine + cholesterol = cholesteryl 3-beta-D-xyloside + an N-acylsphing-4-enine. The catalysed reaction is beta-D-xylosyl-(1&lt;-&gt;1')-N-(9Z-octadecenoyl)-sphing-4-enine + cholesterol = cholesteryl 3-beta-D-xyloside + N-(9Z-octadecenoyl)-sphing-4-enine. It participates in steroid metabolism; cholesterol metabolism. It functions in the pathway sphingolipid metabolism. In terms of biological role, glucosylceramidase that catalyzes, within the lysosomal compartment, the hydrolysis of glucosylceramides/GlcCers (such as beta-D-glucosyl-(1&lt;-&gt;1')-N-acylsphing-4-enine) into free ceramides (such as N-acylsphing-4-enine) and glucose. Plays a central role in the degradation of complex lipids and the turnover of cellular membranes. Through the production of ceramides, participates in the PKC-activated salvage pathway of ceramide formation. Catalyzes the glucosylation of cholesterol, through a transglucosylation reaction where glucose is transferred from GlcCer to cholesterol. GlcCer containing mono-unsaturated fatty acids (such as beta-D-glucosyl-N-(9Z-octadecenoyl)-sphing-4-enine) are preferred as glucose donors for cholesterol glucosylation when compared with GlcCer containing same chain length of saturated fatty acids (such as beta-D-glucosyl-N-octadecanoyl-sphing-4-enine). Under specific conditions, may alternatively catalyze the reverse reaction, transferring glucose from cholesteryl 3-beta-D-glucoside to ceramide. Can also hydrolyze cholesteryl 3-beta-D-glucoside producing glucose and cholesterol. Catalyzes the hydrolysis of galactosylceramides/GalCers (such as beta-D-galactosyl-(1&lt;-&gt;1')-N-acylsphing-4-enine), as well as the transfer of galactose between GalCers and cholesterol in vitro, but with lower activity than with GlcCers. Contrary to GlcCer and GalCer, xylosylceramide/XylCer (such as beta-D-xyosyl-(1&lt;-&gt;1')-N-acylsphing-4-enine) is not a good substrate for hydrolysis, however it is a good xylose donor for transxylosylation activity to form cholesteryl 3-beta-D-xyloside. The protein is Lysosomal acid glucosylceramidase (GBA1) of Pan troglodytes (Chimpanzee).